The primary structure comprises 490 residues: GTPase Der (490 aa).

EngA-type G domains lie at 3–166 (PVVA…AEAM) and 200–373 (IKLA…DSAT). GTP-binding positions include 9–16 (GRPNVGKS), 56–60 (DTGGI), 118–121 (NKVD), 206–213 (GKPNVGKS), 253–257 (DTAGV), and 318–321 (NKWD). The 85-residue stretch at 374–458 (RRVSTSMLTR…PIQIRFQDGG (85 aa)) folds into the KH-like domain.

It belongs to the TRAFAC class TrmE-Era-EngA-EngB-Septin-like GTPase superfamily. EngA (Der) GTPase family. As to quaternary structure, associates with the 50S ribosomal subunit.

GTPase that plays an essential role in the late steps of ribosome biogenesis. In Shewanella piezotolerans (strain WP3 / JCM 13877), this protein is GTPase Der.